A 211-amino-acid chain; its full sequence is Germin-like protein subfamily 3 member 3 (211 aa).

An N-terminal signal peptide occupies residues 1–20; the sequence is MKMIIQIFFIISLISTISFA. Cysteine 26 and cysteine 41 are joined by a disulfide. One can recognise a Cupin type-1 domain in the interval 55-201; that stretch reads TGLGTAGNTS…TTFLSDAEVK (147 aa). N-linked (GlcNAc...) asparagine glycosylation occurs at asparagine 62. Residues histidine 103, histidine 105, and glutamate 110 each coordinate Mn(2+). Serine 140 carries the phosphoserine modification. Mn(2+) is bound at residue histidine 149.

Belongs to the germin family. Oligomer (believed to be a pentamer but probably hexamer). As to expression, expressed in leaves and flowers.

Its subcellular location is the secreted. The protein resides in the extracellular space. It localises to the apoplast. May play a role in plant defense. Probably has no oxalate oxidase activity even if the active site is conserved. The chain is Germin-like protein subfamily 3 member 3 (GER3) from Arabidopsis thaliana (Mouse-ear cress).